Reading from the N-terminus, the 120-residue chain is NAD(P)H-quinone oxidoreductase subunit 3, chloroplastic (120 aa).

3 helical membrane passes run 9-29, 64-84, and 88-108; these read IFWTFLIIASLIPILAFWISG, MFALVFVVFDVETVFLYPWAM, and VLGVSVFIEAFIFVLILVVGL.

Belongs to the complex I subunit 3 family. NDH is composed of at least 16 different subunits, 5 of which are encoded in the nucleus.

It is found in the plastid. Its subcellular location is the chloroplast thylakoid membrane. It catalyses the reaction a plastoquinone + NADH + (n+1) H(+)(in) = a plastoquinol + NAD(+) + n H(+)(out). The catalysed reaction is a plastoquinone + NADPH + (n+1) H(+)(in) = a plastoquinol + NADP(+) + n H(+)(out). Its function is as follows. NDH shuttles electrons from NAD(P)H:plastoquinone, via FMN and iron-sulfur (Fe-S) centers, to quinones in the photosynthetic chain and possibly in a chloroplast respiratory chain. The immediate electron acceptor for the enzyme in this species is believed to be plastoquinone. Couples the redox reaction to proton translocation, and thus conserves the redox energy in a proton gradient. This is NAD(P)H-quinone oxidoreductase subunit 3, chloroplastic from Agrostis stolonifera (Creeping bentgrass).